The primary structure comprises 190 residues: MSTKIIKASAAEPDVFETSISQALVELETNSDLKAQLRELYITKAKEIELHNKKSIIIYVPMPKLKAFQKIQIRLVRELEKKFSGKHVVFIGDRKILPKPSHKTRVANKQKRPRSRTLTSVYDAILEDLVFPAEIVGKRIRIKLDGSQLIKVHLDKNQQTTIEHKVDTFQSVYKKLTGREVTFEFPEPYL.

The protein belongs to the eukaryotic ribosomal protein eS7 family. In terms of assembly, component of the small ribosomal subunit. Part of the small subunit (SSU) processome, composed of more than 70 proteins and the RNA chaperone small nucleolar RNA (snoRNA) U3.

It is found in the cytoplasm. The protein resides in the cytoskeleton. Its subcellular location is the microtubule organizing center. It localises to the centrosome. The protein localises to the nucleus. It is found in the nucleolus. Component of the small ribosomal subunit. The ribosome is a large ribonucleoprotein complex responsible for the synthesis of proteins in the cell. Required for rRNA maturation. Part of the small subunit (SSU) processome, first precursor of the small eukaryotic ribosomal subunit. During the assembly of the SSU processome in the nucleolus, many ribosome biogenesis factors, an RNA chaperone and ribosomal proteins associate with the nascent pre-rRNA and work in concert to generate RNA folding, modifications, rearrangements and cleavage as well as targeted degradation of pre-ribosomal RNA by the RNA exosome. The polypeptide is Small ribosomal subunit protein eS7 (RpS7) (Spodoptera frugiperda (Fall armyworm)).